We begin with the raw amino-acid sequence, 140 residues long: Putative pre-16S rRNA nuclease (140 aa).

It belongs to the YqgF nuclease family.

It localises to the cytoplasm. Could be a nuclease involved in processing of the 5'-end of pre-16S rRNA. The chain is Putative pre-16S rRNA nuclease from Chlorobium chlorochromatii (strain CaD3).